A 272-amino-acid polypeptide reads, in one-letter code: Dermonecrotic toxin LvSicTox-alphaIC1bv (272 aa).

H5 is a catalytic residue. 2 residues coordinate Mg(2+): E25 and D27. Catalysis depends on H41, which acts as the Nucleophile. Intrachain disulfides connect C45–C51 and C47–C189. D84 is a Mg(2+) binding site.

This sequence belongs to the arthropod phospholipase D family. Class II subfamily. The cofactor is Mg(2+). As to expression, expressed by the venom gland.

The protein localises to the secreted. The enzyme catalyses an N-(acyl)-sphingosylphosphocholine = an N-(acyl)-sphingosyl-1,3-cyclic phosphate + choline. The catalysed reaction is an N-(acyl)-sphingosylphosphoethanolamine = an N-(acyl)-sphingosyl-1,3-cyclic phosphate + ethanolamine. It catalyses the reaction a 1-acyl-sn-glycero-3-phosphocholine = a 1-acyl-sn-glycero-2,3-cyclic phosphate + choline. It carries out the reaction a 1-acyl-sn-glycero-3-phosphoethanolamine = a 1-acyl-sn-glycero-2,3-cyclic phosphate + ethanolamine. Dermonecrotic toxins cleave the phosphodiester linkage between the phosphate and headgroup of certain phospholipids (sphingolipid and lysolipid substrates), forming an alcohol (often choline) and a cyclic phosphate. This toxin acts on sphingomyelin (SM). It may also act on ceramide phosphoethanolamine (CPE), lysophosphatidylcholine (LPC) and lysophosphatidylethanolamine (LPE), but not on lysophosphatidylserine (LPS), and lysophosphatidylglycerol (LPG). It acts by transphosphatidylation, releasing exclusively cyclic phosphate products as second products. Induces dermonecrosis, hemolysis, increased vascular permeability, edema, inflammatory response, and platelet aggregation. This chain is Dermonecrotic toxin LvSicTox-alphaIC1bv, found in Loxosceles variegata (Recluse spider).